The following is an 84-amino-acid chain: Large ribosomal subunit protein bL31 (84 aa).

2 disordered regions span residues 1-41 (MQHD…DSTN) and 63-84 (RRYGLTDDDEGDDEETEDAADE). Positions 21–30 (EITTRSTMET) are enriched in polar residues. A compositionally biased stretch (acidic residues) spans 68–84 (TDDDEGDDEETEDAADE).

The protein belongs to the bacterial ribosomal protein bL31 family. Type A subfamily. Part of the 50S ribosomal subunit.

In terms of biological role, binds the 23S rRNA. The sequence is that of Large ribosomal subunit protein bL31 from Salinibacter ruber (strain DSM 13855 / M31).